The following is a 797-amino-acid chain: Kinesin-like protein Klp68D (797 aa).

In terms of domain architecture, Kinesin motor spans 19–344 (CVQVVVRCRP…LRYASRAKSI (326 aa)). Residue 106–113 (GQTGTGKT) participates in ATP binding. Residues 350–384 (KNEDPQDAKLKEYQEEIERLKRLIAPQQQQRSEKQ) are a coiled coil. 3 disordered regions span residues 371–450 (RLIA…ELER), 610–656 (SSFP…PSSL), and 722–797 (ANSS…LVNK). The segment covering 386-396 (TIKKQRVKKPK) has biased composition (basic residues). A compositionally biased stretch (acidic residues) spans 417 to 431 (QVDEDRDSDGDGAES). Basic and acidic residues predominate over residues 432–450 (ESDKENEAEVAKSNEELER). Residues 432–580 (ESDKENEAEV…LVKELKRQLL (149 aa)) are a coiled coil. Positions 626-638 (GYRRPVSHPQRRR) are enriched in basic residues. A compositionally biased stretch (low complexity) spans 782–791 (KKPASAYPKA).

This sequence belongs to the TRAFAC class myosin-kinesin ATPase superfamily. Kinesin family. Kinesin II subfamily.

It localises to the cytoplasm. The protein localises to the cytoskeleton. Its function is as follows. Plus-end directed microtubule motor that may be used for anterograde axonal transport and could conceivably move cargos in fly neurons different than those moved by kinesin heavy chain or other plus-end directed motors. The polypeptide is Kinesin-like protein Klp68D (Drosophila pseudoobscura pseudoobscura (Fruit fly)).